A 410-amino-acid polypeptide reads, in one-letter code: Dipeptidase 1 (410 aa).

The signal sequence occupies residues 1 to 16 (MWTGWWLWPLVAVCTA). Residues His36 and Asp38 each contribute to the Zn(2+) site. N-linked (GlcNAc...) asparagine glycosylation is found at Asn57 and Asn62. A disulfide bridge links Cys87 with Cys170. Position 141 (Glu141) interacts with Zn(2+). His168 serves as a coordination point for substrate. The Zn(2+) site is built by His214 and His235. A disulfide bridge connects residues Cys242 and Cys274. Arg246 provides a ligand contact to substrate. The N-linked (GlcNAc...) asparagine glycan is linked to Asn279. Asp304 contacts substrate. Ser384 is lipidated: GPI-anchor amidated serine. A propeptide spans 385–410 (GAPSLHLQPGTLLASLVTLLLSLCLL) (removed in mature form).

Belongs to the metallo-dependent hydrolases superfamily. Peptidase M19 family. Homodimer; disulfide-linked. It depends on Zn(2+) as a cofactor.

Its subcellular location is the apical cell membrane. The catalysed reaction is an L-aminoacyl-L-amino acid + H2O = 2 an L-alpha-amino acid. It carries out the reaction leukotriene D4 + H2O = leukotriene E4 + glycine. It catalyses the reaction L-cystine-bis-glycine + 2 H2O = L-cystine + 2 glycine. The enzyme catalyses a beta-lactam + H2O = a substituted beta-amino acid. The catalysed reaction is glycyldehydrophenylalanine + H2O = 2,3-didehydrophenylalanine + glycine. Inhibited by L-penicillamine. Inhibited by cilastatin. Its function is as follows. Hydrolyzes a wide range of dipeptides including the conversion of leukotriene D4 to leukotriene E4. Hydrolyzes cystinyl-bis-glycine (cys-bis-gly) formed during glutathione degradation. Also possesses beta lactamase activity and hydrolytically inactivates beta-lactam antibiotics. Independently of its dipeptidase activity, acts as an adhesion receptor for neutrophil recruitment from bloodstream into inflamed lungs and liver. This is Dipeptidase 1 (DPEP1) from Bos taurus (Bovine).